A 692-amino-acid polypeptide reads, in one-letter code: MKVFCGRANPTTGSLEWLEEDEHYDYHQEIARSSYADMLHDKDRNIKYYQGIRAAVSRVKDRGQKALVLDIGTGTGLLSMMAVTAGADFCYAIEVFKPMADAAVKIVEKNGFSDKIKVINKHSTEVTVGPDGDLPCRANILVTELFDTELIGEGALPSYEHAHRHLVQENCEAVPHKATVYAQLVESRRMWSWNKLFPVHVQTSLGEQVIVPPSELERCPGAPSVYDIQLNQVPSTDFTALSDVLPMFSVDFSKQVSSSAACHSKQFVPLASGQAQVVLSWWDIEMDPEGKITCTMAPFWAQTNPQELQWRDHWMQCVYFLPQEEPVVQGSPRCLVAHHDDYCVWYSLQRTSADENEEVYQVRPVCDCQAHLLWNRPRFGEINDQDRTDQYAQALRTVLMPGTICLCVSDGSLLSLLAHHLGAEQVFTVESSAASYRLMKRIFKANHLEDKVSIIKKRPELLTSADLEGKKVSLLLGEPFFATSLLPWHNLYFWYARTSVDQHLEPGAVVMPQAASLYAMIVEFRDLWRIRSPCGDCEGFDVHIMDDMIKHSLDFRESREAEPHPLWEYPCRSLSEPQQILTFDFQQPVPQKPVHAEGSMELRRPGKSHGAVLWMEYHLTPDSTVSTGLMNPLEDKGDCCWNPHCKQAVYFLSTTVDPRVPLDGPQSVSYAVEFHPLTGDITMEFRLADTLN.

2 SAM-dependent MTase PRMT-type domains span residues 14–345 (SLEW…YCVW) and 358–684 (EVYQ…ITME). Arg-32 is subject to Omega-N-methylarginine. Catalysis depends on residues Glu-144 and Glu-153.

Belongs to the class I-like SAM-binding methyltransferase superfamily. Protein arginine N-methyltransferase family. PRMT7 subfamily. In terms of assembly, interacts with CTCFL, PRMT5 and SNRPD3. Homodimer and heterodimer.

Its subcellular location is the cytoplasm. The protein localises to the nucleus. It catalyses the reaction L-arginyl-[protein] + S-adenosyl-L-methionine = N(omega)-methyl-L-arginyl-[protein] + S-adenosyl-L-homocysteine + H(+). Arginine methyltransferase that can both catalyze the formation of omega-N monomethylarginine (MMA) and symmetrical dimethylarginine (sDMA), with a preference for the formation of MMA. Specifically mediates the symmetrical dimethylation of arginine residues in the small nuclear ribonucleoproteins Sm D1 (SNRPD1) and Sm D3 (SNRPD3); such methylation being required for the assembly and biogenesis of snRNP core particles. Specifically mediates the symmetric dimethylation of histone H4 'Arg-3' to form H4R3me2s. Plays a role in gene imprinting by being recruited by CTCFL at the H19 imprinted control region (ICR) and methylating histone H4 to form H4R3me2s, possibly leading to recruit DNA methyltransferases at these sites. May also play a role in embryonic stem cell (ESC) pluripotency. Also able to mediate the arginine methylation of histone H2A and myelin basic protein (MBP) in vitro; the relevance of such results is however unclear in vivo. The protein is Protein arginine N-methyltransferase 7 (Prmt7) of Cricetulus longicaudatus (Long-tailed dwarf hamster).